Consider the following 267-residue polypeptide: Heme-containing CO-sensing transcriptional regulator RcoM 1 (267 aa).

The PAS domain occupies 15–86; sequence RAETFQHKLE…KSRDKLRFLL (72 aa). Residues histidine 74 and methionine 104 each coordinate heme. Residues 161–266 enclose the HTH LytTR-type domain; that stretch reads IPVYRKNRVI…TAQLKELLGV (106 aa).

The cofactor is heme.

It is found in the cytoplasm. In terms of biological role, one-component, b-type heme-containing aerobic sensor and transcriptional regulator that responds to CO by activating the expression of the oxidation operon cox. This chain is Heme-containing CO-sensing transcriptional regulator RcoM 1 (rcoM1), found in Paraburkholderia xenovorans (strain LB400).